We begin with the raw amino-acid sequence, 65 residues long: Neurotoxin Bot2 (65 aa).

Residues 2–64 (RDAYIAQPEN…VPIRIEGKCH (63 aa)) form the LCN-type CS-alpha/beta domain. 4 cysteine pairs are disulfide-bonded: Cys12-Cys63, Cys16-Cys36, Cys22-Cys46, and Cys26-Cys48. Phe65 is subject to Phenylalanine amide.

This sequence belongs to the long (4 C-C) scorpion toxin superfamily. Sodium channel inhibitor family. Alpha subfamily. Expressed by the venom gland.

It localises to the secreted. In terms of biological role, binds to sodium channels (Nav) and inhibits the inactivation of the activated channels, thereby blocking neuronal transmission. This is Neurotoxin Bot2 from Buthus occitanus tunetanus (Common European scorpion).